The primary structure comprises 89 residues: Small ribosomal subunit protein uS15 (89 aa).

This sequence belongs to the universal ribosomal protein uS15 family. As to quaternary structure, part of the 30S ribosomal subunit. Forms a bridge to the 50S subunit in the 70S ribosome, contacting the 23S rRNA.

In terms of biological role, one of the primary rRNA binding proteins, it binds directly to 16S rRNA where it helps nucleate assembly of the platform of the 30S subunit by binding and bridging several RNA helices of the 16S rRNA. Forms an intersubunit bridge (bridge B4) with the 23S rRNA of the 50S subunit in the ribosome. This chain is Small ribosomal subunit protein uS15, found in Arthrobacter sp. (strain FB24).